A 21-amino-acid chain; its full sequence is Kassinatuerin-1 (21 aa).

The residue at position 21 (isoleucine 21) is an Isoleucine amide.

As to expression, expressed by the skin dorsal glands.

Its subcellular location is the secreted. In terms of biological role, shows broad-spectrum antimicrobial activity against the Gram-negative bacterium E.coli (MIC=6.25 uM), K.pneumoniae (MIC=25 uM), E.cloacae (MIC=6.25 uM), P.aeruginosa (MIC=25 uM), the Gram-positive bacterium S.aureus (MIC=6.25 uM), S.epidermidis (MIC=6.25 uM), E.faecalis (MIC=12.5 uM), and the fungus C.albicans (MIC=100 uM). Has no antimicrobial effect against P.mirabilis (MIC&gt;100 uM). Has relatively high cytolytic and hemolytic activities. Its alpha-helix has considerable amphipathic character. The chain is Kassinatuerin-1 from Kassina senegalensis (Senegal running frog).